The primary structure comprises 177 residues: Adenine phosphoribosyltransferase (177 aa).

It belongs to the purine/pyrimidine phosphoribosyltransferase family. Homodimer.

The protein resides in the cytoplasm. It carries out the reaction AMP + diphosphate = 5-phospho-alpha-D-ribose 1-diphosphate + adenine. It functions in the pathway purine metabolism; AMP biosynthesis via salvage pathway; AMP from adenine: step 1/1. Its function is as follows. Catalyzes a salvage reaction resulting in the formation of AMP, that is energically less costly than de novo synthesis. In Leptospira borgpetersenii serovar Hardjo-bovis (strain JB197), this protein is Adenine phosphoribosyltransferase.